The sequence spans 283 residues: Type III pantothenate kinase (283 aa).

9-16 (DIGNTRLK) provides a ligand contact to ATP. Residues Tyr116 and 123–126 (GVDR) each bind substrate. Asp125 serves as the catalytic Proton acceptor. Residue Thr149 coordinates ATP. Thr211 contacts substrate.

The protein belongs to the type III pantothenate kinase family. Homodimer. The cofactor is NH4(+). It depends on K(+) as a cofactor.

The protein resides in the cytoplasm. The catalysed reaction is (R)-pantothenate + ATP = (R)-4'-phosphopantothenate + ADP + H(+). Its pathway is cofactor biosynthesis; coenzyme A biosynthesis; CoA from (R)-pantothenate: step 1/5. In terms of biological role, catalyzes the phosphorylation of pantothenate (Pan), the first step in CoA biosynthesis. The polypeptide is Type III pantothenate kinase (Cupriavidus taiwanensis (strain DSM 17343 / BCRC 17206 / CCUG 44338 / CIP 107171 / LMG 19424 / R1) (Ralstonia taiwanensis (strain LMG 19424))).